The sequence spans 1288 residues: Outer capsid protein lambda-2 (1288 aa).

892–899 (GAAAAGKS) is an ATP binding site.

It belongs to the orthoreovirus lambda-2 protein family. Interacts with protein mu-NS; in viral inclusions.

It localises to the virion. It carries out the reaction a 5'-end diphospho-ribonucleoside in mRNA + GTP + H(+) = a 5'-end (5'-triphosphoguanosine)-ribonucleoside in mRNA + diphosphate. The enzyme catalyses a 5'-end (5'-triphosphoguanosine)-ribonucleoside in mRNA + S-adenosyl-L-methionine = a 5'-end (N(7)-methyl 5'-triphosphoguanosine)-ribonucleoside in mRNA + S-adenosyl-L-homocysteine. In terms of biological role, outer capsid protein involved in mRNA capping. Catalyzes the last 3 enzymatic activities for formation of the 5' cap structure on the viral plus-strand transcripts, namely the RNA guanylyltransferase, RNA-7N- and RNA-2'O-methyltransferase activities. In Reovirus type 2 (strain D5/Jones) (T2J), this protein is Outer capsid protein lambda-2 (L2).